The sequence spans 115 residues: Large ribosomal subunit protein bL19 (115 aa).

Belongs to the bacterial ribosomal protein bL19 family.

Functionally, this protein is located at the 30S-50S ribosomal subunit interface and may play a role in the structure and function of the aminoacyl-tRNA binding site. This Brevibacillus brevis (strain 47 / JCM 6285 / NBRC 100599) protein is Large ribosomal subunit protein bL19.